Reading from the N-terminus, the 238-residue chain is tRNA1(Val) (adenine(37)-N6)-methyltransferase (238 aa).

The protein belongs to the methyltransferase superfamily. tRNA (adenine-N(6)-)-methyltransferase family.

It is found in the cytoplasm. The enzyme catalyses adenosine(37) in tRNA1(Val) + S-adenosyl-L-methionine = N(6)-methyladenosine(37) in tRNA1(Val) + S-adenosyl-L-homocysteine + H(+). In terms of biological role, specifically methylates the adenine in position 37 of tRNA(1)(Val) (anticodon cmo5UAC). The protein is tRNA1(Val) (adenine(37)-N6)-methyltransferase of Shewanella putrefaciens (strain CN-32 / ATCC BAA-453).